Here is a 220-residue protein sequence, read N- to C-terminus: Probable N-acetyl-alpha-D-glucosaminyl L-malate deacetylase 2 (220 aa).

Positions 11, 14, and 125 each coordinate Zn(2+).

It belongs to the PIGL family. Zn(2+) is required as a cofactor.

The enzyme catalyses (S)-malyl N-acetyl-alpha-D-glucosaminide + H2O = (S)-malyl alpha-D-glucosaminide + acetate. Functionally, involved in bacillithiol (BSH) biosynthesis. Catalyzes the second step of the pathway, the deacetylation of N-acetylglucosaminylmalate (GlcNAc-Mal) to glucosamine malate (GlcN-Mal). Has weak activity compared with bshB1. The chain is Probable N-acetyl-alpha-D-glucosaminyl L-malate deacetylase 2 from Bacillus cereus (strain ATCC 14579 / DSM 31 / CCUG 7414 / JCM 2152 / NBRC 15305 / NCIMB 9373 / NCTC 2599 / NRRL B-3711).